Reading from the N-terminus, the 351-residue chain is MEVPTESKTTQIDEISHNLSFTTSNAGDSSWDKISFFRHRSRQIKRDTWLVSVFVLLQIVLFAVTMGVNDCSGNSHGHCSAKLLGRFSFQSLSENPMLGPSASTLEHMGGLSWKALTENHEIWRILTSPWLHSGLFHLFINLGSLIFVGIYMEQQFGPLRIAVIYFLSGIMGSLFAVLFVRNIPSISSGAAFFGLIGAMLSALAKNWNLYNSKISALAIIFTIFTVNFLIGFLPFIDNFANIGGFISGFLLGFVLLFKPQLRQMPPSHKGKLFEDDMNRSTRLKEQFDRPVLRIICLLVFCGILAGVLLAACWGVNLNRHCHWCRYVDCVPTKKWSCSDMTTSCEVYSSKP.

The next 7 membrane-spanning stretches (helical) occupy residues 48–68 (TWLVSVFVLLQIVLFAVTMGV), 130–150 (WLHSGLFHLFINLGSLIFVGI), 160–180 (RIAVIYFLSGIMGSLFAVLFV), 183–203 (IPSISSGAAFFGLIGAMLSAL), 216–236 (ALAIIFTIFTVNFLIGFLPFI), 239–259 (FANIGGFISGFLLGFVLLFKP), and 294–314 (IICLLVFCGILAGVLLAACWG).

It belongs to the peptidase S54 family. Expressed in pollen mother cell.

The protein resides in the golgi apparatus membrane. In terms of biological role, probable inactive rhomboid-type serine protease. Probably essential for the meiosis stage-specific callose accumulation and pollen exine formation. This is Inactive RHOMBOID-like protein 8 from Arabidopsis thaliana (Mouse-ear cress).